A 170-amino-acid chain; its full sequence is Alpha-crystallin A chain (170 aa).

The residue at position 1 (Met1) is an N-acetylmethionine. A required for complex formation with BFSP1 and BFSP2 region spans residues Met1–Glu63. Gln6 is subject to Deamidated glutamine; partial. Phosphoserine is present on Ser45. The residue at position 50 (Gln50) is a Deamidated glutamine; partial. Residues Leu52–Glu161 form the sHSP domain. Residues Lys70 and Lys99 each carry the N6-acetyllysine modification. His100 serves as a coordination point for Zn(2+). Asn101 is subject to Deamidated asparagine; partial. Positions 102, 107, and 151 each coordinate Zn(2+). The tract at residues Pro144–Ser170 is disordered. The span at Asp148 to Pro164 shows a compositional bias: basic and acidic residues. O-linked (GlcNAc) serine glycosylation occurs at Ser159.

The protein belongs to the small heat shock protein (HSP20) family. In terms of assembly, heteromer composed of three CRYAA and one CRYAB subunits. Inter-subunit bridging via zinc ions enhances stability, which is crucial as there is no protein turn over in the lens. Can also form homodimers and homotetramers (dimers of dimers) which serve as the building blocks of homooligomers. Within homooligomers, the zinc-binding motif is created from residues of 3 different molecules. His-100 and Glu-102 from one molecule are ligands of the zinc ion, and His-107 and His-151 residues from additional molecules complete the site with tetrahedral coordination geometry. Part of a complex required for lens intermediate filament formation composed of BFSP1, BFSP2 and CRYAA. In terms of processing, acetylation at Lys-70 may increase chaperone activity. Undergoes age-dependent proteolytical cleavage at the C-terminus.

It is found in the cytoplasm. The protein localises to the nucleus. Functionally, contributes to the transparency and refractive index of the lens. Acts as a chaperone, preventing aggregation of various proteins under a wide range of stress conditions. Required for the correct formation of lens intermediate filaments as part of a complex composed of BFSP1, BFSP2 and CRYAA. This is Alpha-crystallin A chain (CRYAA) from Bradypus variegatus (Brown-throated three-fingered sloth).